Here is a 437-residue protein sequence, read N- to C-terminus: Protein translocase subunit SecY (437 aa).

10 helical membrane-spanning segments follow: residues 19–39 (LFTL…IPGV), 69–89 (LLQI…SIIL), 122–142 (VALA…GALF), 157–177 (IFTT…VMWL), 189–209 (GMSI…LWSI), 219–239 (WIEF…VVFV), 275–295 (GIIP…VVQF), 318–338 (HITV…AISF), 378–398 (GSLY…PLGA), and 400–420 (QNFP…LETV).

This sequence belongs to the SecY/SEC61-alpha family. In terms of assembly, component of the Sec protein translocase complex. Heterotrimer consisting of SecY, SecE and SecG subunits. The heterotrimers can form oligomers, although 1 heterotrimer is thought to be able to translocate proteins. Interacts with the ribosome. Interacts with SecDF, and other proteins may be involved. Interacts with SecA.

It localises to the cell membrane. The central subunit of the protein translocation channel SecYEG. Consists of two halves formed by TMs 1-5 and 6-10. These two domains form a lateral gate at the front which open onto the bilayer between TMs 2 and 7, and are clamped together by SecE at the back. The channel is closed by both a pore ring composed of hydrophobic SecY resides and a short helix (helix 2A) on the extracellular side of the membrane which forms a plug. The plug probably moves laterally to allow the channel to open. The ring and the pore may move independently. The sequence is that of Protein translocase subunit SecY from Streptomyces scabiei.